Reading from the N-terminus, the 114-residue chain is Mediator of RNA polymerase II transcription subunit 11 (114 aa).

The stretch at 28–61 (LELSKEKANASLLDRQLNQFQTSINRVESELSSQ) forms a coiled coil.

The protein belongs to the Mediator complex subunit 11 family. In terms of assembly, component of the Mediator complex. In terms of tissue distribution, ubiquitously expressed at early stage of development. After fertilization expressed in head region as well as in lateral line primordium.

The protein resides in the nucleus. Component of the Mediator complex, a coactivator involved in the regulated transcription of nearly all RNA polymerase II-dependent genes. Mediator functions as a bridge to convey information from gene-specific regulatory proteins to the basal RNA polymerase II transcription machinery. Mediator is recruited to promoters by direct interactions with regulatory proteins and serves as a scaffold for the assembly of a functional pre-initiation complex with RNA polymerase II and the general transcription factors. The sequence is that of Mediator of RNA polymerase II transcription subunit 11 (med11) from Danio rerio (Zebrafish).